The following is a 205-amino-acid chain: Holliday junction branch migration complex subunit RuvA (205 aa).

Positions 1–64 are domain I; the sequence is MIGKLKGVID…EDMIRLYGFA (64 aa). A domain II region spans residues 65–143; that stretch reads NQLEREWFRL…AFAGDASGTI (79 aa). A flexible linker region spans residues 144–152; the sequence is GLKQELGAG. Positions 153-205 are domain III; that stretch reads AAPAPVADAVSALSNLGYSRDQAANAVAAALKEAGENADSAKLIRLGLKELSR.

The protein belongs to the RuvA family. In terms of assembly, homotetramer. Forms an RuvA(8)-RuvB(12)-Holliday junction (HJ) complex. HJ DNA is sandwiched between 2 RuvA tetramers; dsDNA enters through RuvA and exits via RuvB. An RuvB hexamer assembles on each DNA strand where it exits the tetramer. Each RuvB hexamer is contacted by two RuvA subunits (via domain III) on 2 adjacent RuvB subunits; this complex drives branch migration. In the full resolvosome a probable DNA-RuvA(4)-RuvB(12)-RuvC(2) complex forms which resolves the HJ.

The protein localises to the cytoplasm. Its function is as follows. The RuvA-RuvB-RuvC complex processes Holliday junction (HJ) DNA during genetic recombination and DNA repair, while the RuvA-RuvB complex plays an important role in the rescue of blocked DNA replication forks via replication fork reversal (RFR). RuvA specifically binds to HJ cruciform DNA, conferring on it an open structure. The RuvB hexamer acts as an ATP-dependent pump, pulling dsDNA into and through the RuvAB complex. HJ branch migration allows RuvC to scan DNA until it finds its consensus sequence, where it cleaves and resolves the cruciform DNA. The protein is Holliday junction branch migration complex subunit RuvA of Brucella anthropi (strain ATCC 49188 / DSM 6882 / CCUG 24695 / JCM 21032 / LMG 3331 / NBRC 15819 / NCTC 12168 / Alc 37) (Ochrobactrum anthropi).